We begin with the raw amino-acid sequence, 123 residues long: MARILNIEIPNNKRVVISLTYIYGIGRTSAQEICAKAKIDENIRVKDLSEAQLSAIREIAKEYVTEGDLRREVSLNIKRLMEVKCYRGIRHRKGLPVRGQSTKSNARTRKGPRKTVAGKKSTK.

The segment at 94–123 (GLPVRGQSTKSNARTRKGPRKTVAGKKSTK) is disordered. Positions 106–123 (ARTRKGPRKTVAGKKSTK) are enriched in basic residues.

This sequence belongs to the universal ribosomal protein uS13 family. As to quaternary structure, part of the 30S ribosomal subunit. Forms a loose heterodimer with protein S19. Forms two bridges to the 50S subunit in the 70S ribosome.

Functionally, located at the top of the head of the 30S subunit, it contacts several helices of the 16S rRNA. In the 70S ribosome it contacts the 23S rRNA (bridge B1a) and protein L5 of the 50S subunit (bridge B1b), connecting the 2 subunits; these bridges are implicated in subunit movement. Contacts the tRNAs in the A and P-sites. The protein is Small ribosomal subunit protein uS13 of Mycoplasmopsis agalactiae (strain NCTC 10123 / CIP 59.7 / PG2) (Mycoplasma agalactiae).